We begin with the raw amino-acid sequence, 276 residues long: Orotidine 5'-phosphate decarboxylase (276 aa).

Catalysis depends on Lys96, which acts as the Proton donor.

The protein belongs to the OMP decarboxylase family. Type 2 subfamily.

It carries out the reaction orotidine 5'-phosphate + H(+) = UMP + CO2. Its pathway is pyrimidine metabolism; UMP biosynthesis via de novo pathway; UMP from orotate: step 2/2. This chain is Orotidine 5'-phosphate decarboxylase, found in Porphyromonas gingivalis (strain ATCC 33277 / DSM 20709 / CIP 103683 / JCM 12257 / NCTC 11834 / 2561).